We begin with the raw amino-acid sequence, 176 residues long: GTP-dependent dephospho-CoA kinase (176 aa).

Residues Asp47, Val48, Asp66, and Glu125 each coordinate GTP.

The protein belongs to the GTP-dependent DPCK family.

The enzyme catalyses 3'-dephospho-CoA + GTP = GDP + CoA + H(+). It functions in the pathway cofactor biosynthesis; coenzyme A biosynthesis. Catalyzes the GTP-dependent phosphorylation of the 3'-hydroxyl group of dephosphocoenzyme A to form coenzyme A (CoA). In Methanocella arvoryzae (strain DSM 22066 / NBRC 105507 / MRE50), this protein is GTP-dependent dephospho-CoA kinase.